A 100-amino-acid chain; its full sequence is Urease subunit gamma (100 aa).

The protein belongs to the urease gamma subunit family. In terms of assembly, probable heterotrimer of UreA (gamma), UreB (beta) and UreC (alpha) subunits. Three heterotrimers associate to form the active enzyme. The trimeric urease interacts with an accessory complex composed of UreD, UreF and UreG, which is required for the assembly of the nickel containing metallocenter of UreC. The UreE protein may also play a direct role in nickel transfer to the urease apoprotein.

It localises to the cytoplasm. The catalysed reaction is urea + 2 H2O + H(+) = hydrogencarbonate + 2 NH4(+). It functions in the pathway nitrogen metabolism; urea degradation; CO(2) and NH(3) from urea (urease route): step 1/1. This is Urease subunit gamma from Proteus mirabilis (strain HI4320).